A 549-amino-acid chain; its full sequence is Putative acyl-CoA synthetase YngI (549 aa).

Residues 198-206 (TSGTTGFPK), Asp-423, Arg-438, and Lys-529 each bind ATP.

It belongs to the ATP-dependent AMP-binding enzyme family.

In Bacillus subtilis (strain 168), this protein is Putative acyl-CoA synthetase YngI (yngI).